Here is a 376-residue protein sequence, read N- to C-terminus: Pyrimidine monooxygenase RutA (376 aa).

Residues 61-62 (IK), asparagine 127, glutamate 136, 152-153 (RY), and serine 202 contribute to the FMN site.

Belongs to the NtaA/SnaA/DszA monooxygenase family. RutA subfamily.

It carries out the reaction uracil + FMNH2 + NADH + O2 = (Z)-3-ureidoacrylate + FMN + NAD(+) + H2O + H(+). It catalyses the reaction thymine + FMNH2 + NADH + O2 = (Z)-2-methylureidoacrylate + FMN + NAD(+) + H2O + H(+). In terms of biological role, catalyzes the pyrimidine ring opening between N-3 and C-4 by an unusual flavin hydroperoxide-catalyzed mechanism, adding oxygen atoms in the process to yield ureidoacrylate peracid, that immediately reacts with FMN forming ureidoacrylate and FMN-N(5)-oxide. The FMN-N(5)-oxide reacts spontaneously with NADH to produce FMN. Requires the flavin reductase RutF to regenerate FMN in vivo. The polypeptide is Pyrimidine monooxygenase RutA (Methylorubrum populi (strain ATCC BAA-705 / NCIMB 13946 / BJ001) (Methylobacterium populi)).